We begin with the raw amino-acid sequence, 154 residues long: Aspartate carbamoyltransferase regulatory chain (154 aa).

Zn(2+) is bound by residues C109, C114, C138, and C141.

This sequence belongs to the PyrI family. In terms of assembly, contains catalytic and regulatory chains. Zn(2+) is required as a cofactor.

Involved in allosteric regulation of aspartate carbamoyltransferase. The polypeptide is Aspartate carbamoyltransferase regulatory chain (Aliivibrio fischeri (strain ATCC 700601 / ES114) (Vibrio fischeri)).